The primary structure comprises 143 residues: uncharacterized protein (143 aa).

Residues Met1–Ala24 form the signal peptide.

This is an uncharacterized protein from Bacillus subtilis (strain 168).